We begin with the raw amino-acid sequence, 261 residues long: Phosphoinositide-3-kinase-interacting protein 1 (261 aa).

The signal sequence occupies residues 1 to 21; sequence MLLAWVRTILVSNMLLAEAYG. Topologically, residues 22-166 are extracellular; the sequence is SGGCFWDNGH…NSKEKKDLGT (145 aa). One can recognise a Kringle domain in the interval 24–101; the sequence is GCFWDNGHLY…EKRPCQDLRC (78 aa). Cystine bridges form between Cys25/Cys101, Cys46/Cys82, and Cys70/Cys96. The segment covering 90–101 has biased composition (basic and acidic residues); that stretch reads APEKRPCQDLRC. Residues 90–122 form a disordered region; it reads APEKRPCQDLRCPDTTSQGLPTSATETEEAAEV. The helical transmembrane segment at 167-187 threads the bilayer; that stretch reads LGYVLGITMMVIIVVIGAGIV. The Cytoplasmic segment spans residues 188–261; it reads LGYTYKRGKD…LMGQAGTPGA (74 aa).

It localises to the cell membrane. In terms of biological role, negative regulator of hepatic phosphatidylinositol 3-kinase (PI3K) activity. The sequence is that of Phosphoinositide-3-kinase-interacting protein 1 (PIK3IP1) from Bos taurus (Bovine).